A 602-amino-acid polypeptide reads, in one-letter code: DEAD-box ATP-dependent RNA helicase 52A (602 aa).

Residues 9 to 31 (KSVEAGGEPGGGGGGAWSTVSRS) form a disordered region. The span at 15 to 24 (GEPGGGGGGA) shows a compositional bias: gly residues. The Q motif signature appears at 84–112 (DGFEAAGLVEAVLRNVARCGYESPTPVQR). One can recognise a Helicase ATP-binding domain in the interval 115 to 305 (MPIALAGRDL…SDFLSNYIFI (191 aa)). An ATP-binding site is contributed by 128 to 135 (AQTGSGKT). Positions 249-252 (DEAD) match the DEAD box motif. Residues 328–485 (EKRGYLLDLL…DVPDWLVQYA (158 aa)) form the Helicase C-terminal domain. Disordered stretches follow at residues 492–521 (GSSYGGRNRRSGGGGNRFAGRDFRQGSGGG) and 552–602 (RGGG…SGWD). Gly residues predominate over residues 552–574 (RGGGYSRGGRGGYSGGGGGGGGD).

It belongs to the DEAD box helicase family. DDX3/DED1 subfamily.

It carries out the reaction ATP + H2O = ADP + phosphate + H(+). The chain is DEAD-box ATP-dependent RNA helicase 52A from Oryza sativa subsp. japonica (Rice).